Reading from the N-terminus, the 238-residue chain is tRNA (guanine-N(7)-)-methyltransferase (238 aa).

The S-adenosyl-L-methionine site is built by glutamate 68, glutamate 93, aspartate 120, and aspartate 143. Residue aspartate 143 is part of the active site. Residues lysine 147, aspartate 179, and threonine 216–glutamate 219 contribute to the substrate site.

This sequence belongs to the class I-like SAM-binding methyltransferase superfamily. TrmB family.

The catalysed reaction is guanosine(46) in tRNA + S-adenosyl-L-methionine = N(7)-methylguanosine(46) in tRNA + S-adenosyl-L-homocysteine. The protein operates within tRNA modification; N(7)-methylguanine-tRNA biosynthesis. In terms of biological role, catalyzes the formation of N(7)-methylguanine at position 46 (m7G46) in tRNA. In Shewanella denitrificans (strain OS217 / ATCC BAA-1090 / DSM 15013), this protein is tRNA (guanine-N(7)-)-methyltransferase.